Consider the following 265-residue polypeptide: NAD-capped RNA hydrolase NudC (265 aa).

Arg-76 serves as a coordination point for substrate. Residues Cys-106, Cys-109, Cys-124, and Cys-127 each contribute to the Zn(2+) site. Tyr-132 contacts substrate. One can recognise a Nudix hydrolase domain in the interval 133-256 (PRISPAMMVL…SIAHRLIRHA (124 aa)). A divalent metal cation-binding residues include Ala-166, Glu-182, and Glu-186. Positions 167-188 (GFVEPGETLEECVHRETWEEVG) match the Nudix box motif. 200–207 (QSWPFPHS) is a substrate binding site. Glu-227 is an a divalent metal cation binding site. Ala-249 lines the substrate pocket.

This sequence belongs to the Nudix hydrolase family. NudC subfamily. As to quaternary structure, homodimer. It depends on Mg(2+) as a cofactor. Mn(2+) is required as a cofactor. The cofactor is Zn(2+).

The catalysed reaction is a 5'-end NAD(+)-phospho-ribonucleoside in mRNA + H2O = a 5'-end phospho-adenosine-phospho-ribonucleoside in mRNA + beta-nicotinamide D-ribonucleotide + 2 H(+). It catalyses the reaction NAD(+) + H2O = beta-nicotinamide D-ribonucleotide + AMP + 2 H(+). The enzyme catalyses NADH + H2O = reduced beta-nicotinamide D-ribonucleotide + AMP + 2 H(+). In terms of biological role, mRNA decapping enzyme that specifically removes the nicotinamide adenine dinucleotide (NAD) cap from a subset of mRNAs by hydrolyzing the diphosphate linkage to produce nicotinamide mononucleotide (NMN) and 5' monophosphate mRNA. The NAD-cap is present at the 5'-end of some mRNAs and stabilizes RNA against 5'-processing. Has preference for mRNAs with a 5'-end purine. Catalyzes the hydrolysis of a broad range of dinucleotide pyrophosphates. The sequence is that of NAD-capped RNA hydrolase NudC from Chromobacterium violaceum (strain ATCC 12472 / DSM 30191 / JCM 1249 / CCUG 213 / NBRC 12614 / NCIMB 9131 / NCTC 9757 / MK).